A 473-amino-acid polypeptide reads, in one-letter code: Trehalose-6-phosphate synthase (473 aa).

Position 10 (Arg-10) interacts with D-glucose 6-phosphate. UDP-alpha-D-glucose is bound at residue 21–22 (GG). 2 residues coordinate D-glucose 6-phosphate: Tyr-76 and Asp-130. UDP-alpha-D-glucose contacts are provided by Arg-262 and Lys-267. D-glucose 6-phosphate is bound at residue Arg-300. Residues Phe-339 and 365 to 369 (LVAKE) contribute to the UDP-alpha-D-glucose site.

Belongs to the glycosyltransferase 20 family. As to quaternary structure, homotetramer.

The enzyme catalyses D-glucose 6-phosphate + UDP-alpha-D-glucose = alpha,alpha-trehalose 6-phosphate + UDP + H(+). It functions in the pathway glycan biosynthesis; trehalose biosynthesis. Functionally, probably involved in the osmoprotection via the biosynthesis of trehalose. Catalyzes the transfer of glucose from UDP-alpha-D-glucose (UDP-Glc) to D-glucose 6-phosphate (Glc-6-P) to form trehalose-6-phosphate. Acts with retention of the anomeric configuration of the UDP-sugar donor. The sequence is that of Trehalose-6-phosphate synthase from Citrobacter koseri (strain ATCC BAA-895 / CDC 4225-83 / SGSC4696).